The chain runs to 298 residues: Succinate dehydrogenase [ubiquinone] iron-sulfur subunit, mitochondrial (298 aa).

The 2Fe-2S ferredoxin-type domain occupies 59 to 147 (YRFNPEAPGA…STKIYPLPHM (89 aa)). [2Fe-2S] cluster contacts are provided by C107, C112, C115, and C127. In terms of domain architecture, 4Fe-4S ferredoxin-type spans 190–220 (ERDRLDGLYECILCACCSTSCPSYWWNADKY). Residues C200, C203, and C206 each contribute to the [4Fe-4S] cluster site. C210 contributes to the [3Fe-4S] cluster binding site. Position 215 (W215) interacts with a ubiquinone. [3Fe-4S] cluster is bound by residues C257 and C263. C267 is a binding site for [4Fe-4S] cluster.

This sequence belongs to the succinate dehydrogenase/fumarate reductase iron-sulfur protein family. Component of complex II composed of four subunits: a flavoprotein (FP), an iron-sulfur protein (IP), and a cytochrome b composed of a large and a small subunit. [2Fe-2S] cluster is required as a cofactor. The cofactor is [3Fe-4S] cluster. [4Fe-4S] cluster serves as cofactor.

The protein localises to the mitochondrion inner membrane. The enzyme catalyses a quinone + succinate = fumarate + a quinol. It participates in carbohydrate metabolism; tricarboxylic acid cycle; fumarate from succinate (eukaryal route): step 1/1. Iron-sulfur protein (IP) subunit of succinate dehydrogenase (SDH) that is involved in complex II of the mitochondrial electron transport chain and is responsible for transferring electrons from succinate to ubiquinone (coenzyme Q). This Caenorhabditis elegans protein is Succinate dehydrogenase [ubiquinone] iron-sulfur subunit, mitochondrial (sdhb-1).